Here is a 509-residue protein sequence, read N- to C-terminus: tRNA-2-methylthio-N(6)-dimethylallyladenosine synthase (509 aa).

Polar residues predominate over residues 1-15 (MNEQQRLASQQANAS). The segment at 1 to 22 (MNEQQRLASQQANASTKKEEKD) is disordered. The MTTase N-terminal domain occupies 66–184 (RKFYIRTYGC…LPYILKDAMF (119 aa)). 6 residues coordinate [4Fe-4S] cluster: Cys75, Cys111, Cys145, Cys221, Cys225, and Cys228. One can recognise a Radical SAM core domain in the interval 207–437 (RRGDIKAWVN…NELVNEFSAK (231 aa)). The 64-residue stretch at 440–503 (KKYEGQIVEV…TWSLNGELVE (64 aa)) folds into the TRAM domain.

Belongs to the methylthiotransferase family. MiaB subfamily. In terms of assembly, monomer. The cofactor is [4Fe-4S] cluster.

It localises to the cytoplasm. It carries out the reaction N(6)-dimethylallyladenosine(37) in tRNA + (sulfur carrier)-SH + AH2 + 2 S-adenosyl-L-methionine = 2-methylsulfanyl-N(6)-dimethylallyladenosine(37) in tRNA + (sulfur carrier)-H + 5'-deoxyadenosine + L-methionine + A + S-adenosyl-L-homocysteine + 2 H(+). Functionally, catalyzes the methylthiolation of N6-(dimethylallyl)adenosine (i(6)A), leading to the formation of 2-methylthio-N6-(dimethylallyl)adenosine (ms(2)i(6)A) at position 37 in tRNAs that read codons beginning with uridine. The protein is tRNA-2-methylthio-N(6)-dimethylallyladenosine synthase of Bacillus cytotoxicus (strain DSM 22905 / CIP 110041 / 391-98 / NVH 391-98).